A 185-amino-acid chain; its full sequence is Serine/arginine-rich splicing factor RSZ21 (185 aa).

The region spanning 2-73 (ARLYVGNLDP…WRVELSRNSS (72 aa)) is the RRM domain. The CCHC-type zinc-finger motif lies at 86–103 (MKCYECGETGHFARECRL). Residues 104–185 (RIGPGGLGSG…DGGRYRRSRS (82 aa)) form a disordered region. Over residues 113 to 123 (GKRRSRSRSRS) the composition is skewed to basic residues. Composition is skewed to low complexity over residues 124-138 (RSPQYRKSPTYGRRS) and 151-162 (VSPVRGRSYSRS).

Belongs to the splicing factor SR family. Extensively phosphorylated on serine residues in the RS domain. In terms of tissue distribution, expressed in roots, leaves and immature seeds.

It is found in the nucleus. Its function is as follows. Involved in pre-mRNA splicing. The protein is Serine/arginine-rich splicing factor RSZ21 (RSZP21) of Oryza sativa subsp. japonica (Rice).